Here is a 449-residue protein sequence, read N- to C-terminus: Trigger factor (449 aa).

A PPIase FKBP-type domain is found at 162–247 (GDTVTIDYTG…IHEVKSKELP (86 aa)). Over residues 427-438 (AKKATKKSTAKK) the composition is skewed to basic residues. The segment at 427 to 449 (AKKATKKSTAKKSTKEDEKKADK) is disordered. The span at 439–449 (STKEDEKKADK) shows a compositional bias: basic and acidic residues.

It belongs to the FKBP-type PPIase family. Tig subfamily.

It is found in the cytoplasm. The catalysed reaction is [protein]-peptidylproline (omega=180) = [protein]-peptidylproline (omega=0). In terms of biological role, involved in protein export. Acts as a chaperone by maintaining the newly synthesized protein in an open conformation. Functions as a peptidyl-prolyl cis-trans isomerase. In Lactobacillus gasseri (strain ATCC 33323 / DSM 20243 / BCRC 14619 / CIP 102991 / JCM 1131 / KCTC 3163 / NCIMB 11718 / NCTC 13722 / AM63), this protein is Trigger factor.